The chain runs to 285 residues: Probable cobalamin biosynthesis protein CobD (285 aa).

4 helical membrane passes run 10-32 (LIDL…GKVI), 45-67 (YLDF…ILSH), 145-167 (VIAP…RAVN), and 266-283 (VYWI…IILY).

This sequence belongs to the CobD/CbiB family.

The protein localises to the cell membrane. Its pathway is cofactor biosynthesis; adenosylcobalamin biosynthesis. In terms of biological role, converts cobyric acid to cobinamide by the addition of aminopropanol on the F carboxylic group. The sequence is that of Probable cobalamin biosynthesis protein CobD from Pyrococcus furiosus (strain ATCC 43587 / DSM 3638 / JCM 8422 / Vc1).